The following is a 218-amino-acid chain: 3-dehydroquinate dehydratase (218 aa).

3-dehydroquinate contacts are provided by residues 29–31 (EFR) and R56. The active-site Proton donor/acceptor is H116. Catalysis depends on K142, which acts as the Schiff-base intermediate with substrate. Positions 180, 200, and 204 each coordinate 3-dehydroquinate.

Belongs to the type-I 3-dehydroquinase family. Homodimer.

The catalysed reaction is 3-dehydroquinate = 3-dehydroshikimate + H2O. The protein operates within metabolic intermediate biosynthesis; chorismate biosynthesis; chorismate from D-erythrose 4-phosphate and phosphoenolpyruvate: step 3/7. In terms of biological role, involved in the third step of the chorismate pathway, which leads to the biosynthesis of aromatic amino acids. Catalyzes the cis-dehydration of 3-dehydroquinate (DHQ) and introduces the first double bond of the aromatic ring to yield 3-dehydroshikimate. The polypeptide is 3-dehydroquinate dehydratase (Methanococcus maripaludis (strain C5 / ATCC BAA-1333)).